Here is an 84-residue protein sequence, read N- to C-terminus: Small ribosomal subunit protein bS18 (84 aa).

This sequence belongs to the bacterial ribosomal protein bS18 family. In terms of assembly, part of the 30S ribosomal subunit. Forms a tight heterodimer with protein bS6.

In terms of biological role, binds as a heterodimer with protein bS6 to the central domain of the 16S rRNA, where it helps stabilize the platform of the 30S subunit. The chain is Small ribosomal subunit protein bS18 from Polynucleobacter necessarius subsp. necessarius (strain STIR1).